Here is a 282-residue protein sequence, read N- to C-terminus: Shikimate dehydrogenase (NADP(+)) (282 aa).

Shikimate is bound by residues 15 to 17 (SKS) and threonine 62. Lysine 66 functions as the Proton acceptor in the catalytic mechanism. Shikimate-binding residues include asparagine 87 and aspartate 103. Residues 128-132 (GAGGA), 152-157 (NRTPAK), and methionine 216 each bind NADP(+). Tyrosine 218 contacts shikimate. Glycine 240 provides a ligand contact to NADP(+).

The protein belongs to the shikimate dehydrogenase family. As to quaternary structure, homodimer.

It catalyses the reaction shikimate + NADP(+) = 3-dehydroshikimate + NADPH + H(+). Its pathway is metabolic intermediate biosynthesis; chorismate biosynthesis; chorismate from D-erythrose 4-phosphate and phosphoenolpyruvate: step 4/7. In terms of biological role, involved in the biosynthesis of the chorismate, which leads to the biosynthesis of aromatic amino acids. Catalyzes the reversible NADPH linked reduction of 3-dehydroshikimate (DHSA) to yield shikimate (SA). This chain is Shikimate dehydrogenase (NADP(+)), found in Nitrosococcus oceani (strain ATCC 19707 / BCRC 17464 / JCM 30415 / NCIMB 11848 / C-107).